We begin with the raw amino-acid sequence, 490 residues long: Betaine aldehyde dehydrogenase (490 aa).

Residue Asp93 participates in K(+) binding. An NAD(+)-binding site is contributed by 150–152 (GAW). Catalysis depends on Lys162, which acts as the Charge relay system. 176–179 (KPSE) contacts NAD(+). Residue Val180 participates in K(+) binding. 230–233 (GIAS) provides a ligand contact to NAD(+). Leu246 contributes to the K(+) binding site. The active-site Proton acceptor is Glu252. NAD(+)-binding residues include Gly254, Cys286, and Glu387. Cys286 serves as the catalytic Nucleophile. Residue Cys286 is modified to Cysteine sulfenic acid (-SOH). K(+) is bound by residues Lys457 and Gly460. Catalysis depends on Glu464, which acts as the Charge relay system.

Belongs to the aldehyde dehydrogenase family. As to quaternary structure, dimer of dimers. Requires K(+) as cofactor.

It carries out the reaction betaine aldehyde + NAD(+) + H2O = glycine betaine + NADH + 2 H(+). It participates in amine and polyamine biosynthesis; betaine biosynthesis via choline pathway; betaine from betaine aldehyde: step 1/1. Its function is as follows. Involved in the biosynthesis of the osmoprotectant glycine betaine. Catalyzes the irreversible oxidation of betaine aldehyde to the corresponding acid. The chain is Betaine aldehyde dehydrogenase from Yersinia pseudotuberculosis serotype IB (strain PB1/+).